Here is a 480-residue protein sequence, read N- to C-terminus: Proline--tRNA ligase (480 aa).

The protein belongs to the class-II aminoacyl-tRNA synthetase family. ProS type 3 subfamily. As to quaternary structure, homodimer.

It localises to the cytoplasm. It carries out the reaction tRNA(Pro) + L-proline + ATP = L-prolyl-tRNA(Pro) + AMP + diphosphate. In terms of biological role, catalyzes the attachment of proline to tRNA(Pro) in a two-step reaction: proline is first activated by ATP to form Pro-AMP and then transferred to the acceptor end of tRNA(Pro). The protein is Proline--tRNA ligase of Roseiflexus sp. (strain RS-1).